A 210-amino-acid chain; its full sequence is Cytochrome c biogenesis ATP-binding export protein CcmA (210 aa).

The ABC transporter domain occupies 3-205 (LHLQAAGLAC…KPSGYRELNL (203 aa)). 37–44 (GPNGSGKT) provides a ligand contact to ATP.

Belongs to the ABC transporter superfamily. CcmA exporter (TC 3.A.1.107) family. In terms of assembly, the complex is composed of two ATP-binding proteins (CcmA) and two transmembrane proteins (CcmB).

The protein localises to the cell inner membrane. It catalyses the reaction heme b(in) + ATP + H2O = heme b(out) + ADP + phosphate + H(+). Its function is as follows. Part of the ABC transporter complex CcmAB involved in the biogenesis of c-type cytochromes; once thought to export heme, this seems not to be the case, but its exact role is uncertain. Responsible for energy coupling to the transport system. This Pseudomonas putida (strain ATCC 47054 / DSM 6125 / CFBP 8728 / NCIMB 11950 / KT2440) protein is Cytochrome c biogenesis ATP-binding export protein CcmA.